The following is a 488-amino-acid chain: Annexin A7 (488 aa).

Residues 1–18 are compositionally biased toward pro residues; that stretch reads MSYPGYPPTGYPPFPGYP. 2 disordered regions span residues 1–49 and 71–150; these read MSYP…YPQV and GYPG…NTES. A repeat-rich region region spans residues 1-143; it reads MSYPGYPPTG…QYPGGQPTYP (143 aa). The interval 5-20 is 3 X 5 AA tandem repeats of G-Y-P-P-X; sequence GYPPTGYPPFPGYPPA. Residues 89-102 show a composition bias toward gly residues; it reads PGQGFGVPPGGAGF. Annexin repeat units lie at residues 185-256, 257-328, 340-412, and 416-487; these read FDAM…ALFM, PPTY…SMCQ, QMAQ…TILQ, and NRPA…AIVG. N6-acetyllysine is present on lysine 233.

This sequence belongs to the annexin family. Interacts with PDCD6.

Functionally, calcium/phospholipid-binding protein which promotes membrane fusion and is involved in exocytosis. This is Annexin A7 (ANXA7) from Macaca fascicularis (Crab-eating macaque).